We begin with the raw amino-acid sequence, 189 residues long: MSEINKELIEHAVRDILKAIGEDPDREGLLDTPKRVAKMYEEVFSGLNEDPKEHFKTIFGEDHEELVLVKDIAFHSMCEHHLVPFYGKAHVAYIPRGGKVTGLSKLARAVEAVAKRPQLQERITSTIADSMVETLNPHGVMIVVEAEHMCMTMRGVKKPGAKTVTSAVRGTFANDAAARAEVLSFIKND.

Zn(2+)-binding residues include cysteine 78, histidine 81, and cysteine 150.

It belongs to the GTP cyclohydrolase I family. As to quaternary structure, toroid-shaped homodecamer, composed of two pentamers of five dimers.

The catalysed reaction is GTP + H2O = 7,8-dihydroneopterin 3'-triphosphate + formate + H(+). It functions in the pathway cofactor biosynthesis; 7,8-dihydroneopterin triphosphate biosynthesis; 7,8-dihydroneopterin triphosphate from GTP: step 1/1. The protein is GTP cyclohydrolase 1 of Bacillus pumilus (strain SAFR-032).